The chain runs to 225 residues: Ribonuclease 3 (225 aa).

Residues 5–127 (IDKLERKIGY…IIGAVYLDSD (123 aa)) form the RNase III domain. Glu40 lines the Mg(2+) pocket. Asp44 is an active-site residue. Residues Asp113 and Glu116 each contribute to the Mg(2+) site. The active site involves Glu116. A DRBM domain is found at 154–224 (DPKTRLQEFL…AETALEQLSN (71 aa)).

The protein belongs to the ribonuclease III family. Homodimer. The cofactor is Mg(2+).

Its subcellular location is the cytoplasm. The catalysed reaction is Endonucleolytic cleavage to 5'-phosphomonoester.. In terms of biological role, digests double-stranded RNA. Involved in the processing of primary rRNA transcript to yield the immediate precursors to the large and small rRNAs (23S and 16S). Processes some mRNAs, and tRNAs when they are encoded in the rRNA operon. Processes pre-crRNA and tracrRNA of type II CRISPR loci if present in the organism. The protein is Ribonuclease 3 of Vibrio atlanticus (strain LGP32) (Vibrio splendidus (strain Mel32)).